The primary structure comprises 284 residues: Bifunctional protein FolD (284 aa).

Residues 165–167, T192, and V233 contribute to the NADP(+) site; that span reads GRG.

Belongs to the tetrahydrofolate dehydrogenase/cyclohydrolase family. As to quaternary structure, homodimer.

The enzyme catalyses (6R)-5,10-methylene-5,6,7,8-tetrahydrofolate + NADP(+) = (6R)-5,10-methenyltetrahydrofolate + NADPH. It catalyses the reaction (6R)-5,10-methenyltetrahydrofolate + H2O = (6R)-10-formyltetrahydrofolate + H(+). It functions in the pathway one-carbon metabolism; tetrahydrofolate interconversion. Catalyzes the oxidation of 5,10-methylenetetrahydrofolate to 5,10-methenyltetrahydrofolate and then the hydrolysis of 5,10-methenyltetrahydrofolate to 10-formyltetrahydrofolate. The chain is Bifunctional protein FolD from Corynebacterium efficiens (strain DSM 44549 / YS-314 / AJ 12310 / JCM 11189 / NBRC 100395).